The primary structure comprises 271 residues: S-adenosylmethionine decarboxylase proenzyme (271 aa).

Ser121 acts as the Schiff-base intermediate with substrate; via pyruvic acid in catalysis. At Ser121 the chain carries Pyruvic acid (Ser); by autocatalysis. The active-site Proton acceptor; for processing activity is His126. Residue Cys149 is the Proton donor; for catalytic activity of the active site.

It belongs to the prokaryotic AdoMetDC family. Type 2 subfamily. As to quaternary structure, heterooctamer of four alpha and four beta chains arranged as a tetramer of alpha/beta heterodimers. Pyruvate is required as a cofactor. In terms of processing, is synthesized initially as an inactive proenzyme. Formation of the active enzyme involves a self-maturation process in which the active site pyruvoyl group is generated from an internal serine residue via an autocatalytic post-translational modification. Two non-identical subunits are generated from the proenzyme in this reaction, and the pyruvate is formed at the N-terminus of the alpha chain, which is derived from the carboxyl end of the proenzyme. The post-translation cleavage follows an unusual pathway, termed non-hydrolytic serinolysis, in which the side chain hydroxyl group of the serine supplies its oxygen atom to form the C-terminus of the beta chain, while the remainder of the serine residue undergoes an oxidative deamination to produce ammonia and the pyruvoyl group blocking the N-terminus of the alpha chain.

The catalysed reaction is S-adenosyl-L-methionine + H(+) = S-adenosyl 3-(methylsulfanyl)propylamine + CO2. The protein operates within amine and polyamine biosynthesis; S-adenosylmethioninamine biosynthesis; S-adenosylmethioninamine from S-adenosyl-L-methionine: step 1/1. Functionally, catalyzes the decarboxylation of S-adenosylmethionine to S-adenosylmethioninamine (dcAdoMet), the propylamine donor required for the synthesis of the polyamines spermine and spermidine from the diamine putrescine. This is S-adenosylmethionine decarboxylase proenzyme from Clostridium beijerinckii (strain ATCC 51743 / NCIMB 8052) (Clostridium acetobutylicum).